We begin with the raw amino-acid sequence, 212 residues long: Thymidylate kinase (212 aa).

Residue 11 to 18 (GPEGAGKT) coordinates ATP.

Belongs to the thymidylate kinase family.

It catalyses the reaction dTMP + ATP = dTDP + ADP. In terms of biological role, phosphorylation of dTMP to form dTDP in both de novo and salvage pathways of dTTP synthesis. This chain is Thymidylate kinase, found in Streptococcus pneumoniae serotype 19F (strain G54).